We begin with the raw amino-acid sequence, 607 residues long: MTTVIRYGTRLEHLHEAVKLSPHGQTALSVWINDDIRPLPPSRRTWSTMTFIGWWSVWQLSLTNWQLGGSLVASSLSVWQTMVAVVLGRTIAAIVAILIGYIGAEWHIGFPVYSRAIWGVFPYSCHRTVPRQSNVGVILKGAFFPTLLRIGLTVVGFAFQSYTGGLCVTAILSGIFPTFFRMSNTLPASAHVTTQQIIGWAIFNIISIPVLYRRPERSEKLMIGMNIMSFAALLGIMIWSLSHAHGAGDLIHQPSQLQTSDSLGFGIMQGITTVVGTLSIALSRSPFVYPYLKYVSDLDSASQMDFSRFARKPSDQVFGQWFTFIIIGSIMPLFGCLTSSATQAIYGEALWNPPTILAISTSRAAAVFAGIGLVSSQLALNVVDNGKSSPSQSVKGFSNYPVGYSVGMDLSGLLPKYINIRRGCYVGLILGMALCPWELLASATTFVSVISSFSIFMAPFCGIHISDYWFIRQRRLKLSDLYHARPEGIYFYTMGFNWRGVLPWLVGWVPLLPGFMHSINPAIKVSVGADHLYALGFPYGLLSSMAIHTLVNKCFPPPGIGEIDRDDTYGTFTVEEAAKLGVNKDSTEEDSDRSLRRESREVVETKV.

12 helical membrane-spanning segments follow: residues 67–87, 91–111, 152–172, 192–212, 221–241, 262–282, 317–337, 364–384, 423–443, 445–465, 500–520, and 531–551; these read LGGS…AVVL, IAAI…IGFP, LTVV…TAIL, VTTQ…PVLY, LMIG…IWSL, SLGF…SIAL, VFGQ…FGCL, AAAV…NVVD, GCYV…LASA, TFVS…GIHI, GVLP…HSIN, and HLYA…HTLV. The tract at residues 583-607 is disordered; sequence NKDSTEEDSDRSLRRESREVVETKV. Residues 592–607 show a composition bias toward basic and acidic residues; it reads DRSLRRESREVVETKV.

Belongs to the purine-cytosine permease (2.A.39) family.

Its subcellular location is the membrane. In terms of biological role, transporter; part of the gene cluster that mediates the biosynthesis of aspirochlorine (or antibiotic A30641), an unusual halogenated spiro compound with distinctive antifungal properties due to selective inhibition of protein biosynthesis, and which is also active against bacteria, viruses, and murine tumor cells. In Aspergillus oryzae (strain ATCC 42149 / RIB 40) (Yellow koji mold), this protein is Transporter aclS.